A 78-amino-acid polypeptide reads, in one-letter code: MKATALLIAVFILFSVFGDMGYCEFCDTPHCTRVCYDHCVRLNKHYKTCCMTNINDRIRMECLCEDKTGIKPYYPNNI.

A signal peptide spans 1-23 (MKATALLIAVFILFSVFGDMGYC).

In terms of processing, contains 4 disulfide bonds. Expressed by the venom gland.

The protein resides in the secreted. The polypeptide is Toxin-like protein 10 (Urodacus yaschenkoi (Inland robust scorpion)).